The primary structure comprises 699 residues: tRNA wybutosine-synthesizing protein 4 (699 aa).

Residues R94, G120, D151, 197-198, and E224 contribute to the S-adenosyl-L-methionine site; that span reads DL.

This sequence belongs to the methyltransferase superfamily. LCMT family.

The enzyme catalyses 7-[(3S)-3-amino-3-carboxypropyl]wyosine(37) in tRNA(Phe) + S-adenosyl-L-methionine = 7-[(3S)-(3-amino-3-methoxycarbonyl)propyl]wyosine(37) in tRNA(Phe) + S-adenosyl-L-homocysteine. It carries out the reaction 7-[(3S)-(3-amino-3-methoxycarbonyl)propyl]wyosine(37) in tRNA(Phe) + S-adenosyl-L-methionine + CO2 = wybutosine(37) in tRNA(Phe) + S-adenosyl-L-homocysteine + 2 H(+). It functions in the pathway tRNA modification; wybutosine-tRNA(Phe) biosynthesis. Its function is as follows. Probable S-adenosyl-L-methionine-dependent methyltransferase that acts as a component of the wybutosine biosynthesis pathway. Wybutosine is a hyper modified guanosine with a tricyclic base found at the 3'-position adjacent to the anticodon of eukaryotic phenylalanine tRNA. May methylate the carboxyl group of leucine residues to form alpha-leucine ester residues. The chain is tRNA wybutosine-synthesizing protein 4 (PPM2) from Eremothecium gossypii (strain ATCC 10895 / CBS 109.51 / FGSC 9923 / NRRL Y-1056) (Yeast).